The chain runs to 122 residues: NADPH-dependent 7-cyano-7-deazaguanine reductase (122 aa).

The Thioimide intermediate role is filled by cysteine 34. The active-site Proton donor is aspartate 41. Residues 56 to 58 (VEL) and 75 to 76 (HE) contribute to the substrate site.

It belongs to the GTP cyclohydrolase I family. QueF type 1 subfamily.

The protein resides in the cytoplasm. The catalysed reaction is 7-aminomethyl-7-carbaguanine + 2 NADP(+) = 7-cyano-7-deazaguanine + 2 NADPH + 3 H(+). It participates in tRNA modification; tRNA-queuosine biosynthesis. Catalyzes the NADPH-dependent reduction of 7-cyano-7-deazaguanine (preQ0) to 7-aminomethyl-7-deazaguanine (preQ1). The protein is NADPH-dependent 7-cyano-7-deazaguanine reductase of Anaeromyxobacter dehalogenans (strain 2CP-1 / ATCC BAA-258).